The chain runs to 29 residues: Potassium channel toxin alpha-KTx 3.15 (29 aa).

A disulfide bond links cysteine 8 and cysteine 27.

This sequence belongs to the short scorpion toxin superfamily. Potassium channel inhibitor family. Alpha-KTx 03 subfamily. As to expression, expressed by the venom gland.

Its subcellular location is the secreted. Functionally, may play a role in blocking voltage-gated potassium channels Kv1.1/KCNA1, Kv1.3/KCNA3 and Kv1.6/KCNA6. The polypeptide is Potassium channel toxin alpha-KTx 3.15 (Mesobuthus gibbosus (Mediterranean checkered scorpion)).